A 137-amino-acid polypeptide reads, in one-letter code: Sec-independent protein translocase protein TatB (137 aa).

The chain crosses the membrane as a helical span at residues 2–22 (FANIGWGEMLILVIAGLVILG). The disordered stretch occupies residues 92-137 (FFTGKFDQQNGKPAAGQEKPVTPVNPPVTATPPSESTATPFDSDAT). The span at 122–131 (TPPSESTATP) shows a compositional bias: low complexity.

It belongs to the TatB family. The Tat system comprises two distinct complexes: a TatABC complex, containing multiple copies of TatA, TatB and TatC subunits, and a separate TatA complex, containing only TatA subunits. Substrates initially bind to the TatABC complex, which probably triggers association of the separate TatA complex to form the active translocon.

The protein localises to the cell membrane. In terms of biological role, part of the twin-arginine translocation (Tat) system that transports large folded proteins containing a characteristic twin-arginine motif in their signal peptide across membranes. Together with TatC, TatB is part of a receptor directly interacting with Tat signal peptides. TatB may form an oligomeric binding site that transiently accommodates folded Tat precursor proteins before their translocation. This Mycobacterium sp. (strain JLS) protein is Sec-independent protein translocase protein TatB.